Here is a 156-residue protein sequence, read N- to C-terminus: 6,7-dimethyl-8-ribityllumazine synthase (156 aa).

Residues F22, 57–59, and 81–83 contribute to the 5-amino-6-(D-ribitylamino)uracil site; these read AYE and TVI. (2S)-2-hydroxy-3-oxobutyl phosphate is bound at residue 86–87; it reads GT. The active-site Proton donor is H89. F114 contacts 5-amino-6-(D-ribitylamino)uracil. R128 is a binding site for (2S)-2-hydroxy-3-oxobutyl phosphate.

This sequence belongs to the DMRL synthase family. In terms of assembly, forms an icosahedral capsid composed of 60 subunits, arranged as a dodecamer of pentamers.

It carries out the reaction (2S)-2-hydroxy-3-oxobutyl phosphate + 5-amino-6-(D-ribitylamino)uracil = 6,7-dimethyl-8-(1-D-ribityl)lumazine + phosphate + 2 H2O + H(+). Its pathway is cofactor biosynthesis; riboflavin biosynthesis; riboflavin from 2-hydroxy-3-oxobutyl phosphate and 5-amino-6-(D-ribitylamino)uracil: step 1/2. Catalyzes the formation of 6,7-dimethyl-8-ribityllumazine by condensation of 5-amino-6-(D-ribitylamino)uracil with 3,4-dihydroxy-2-butanone 4-phosphate. This is the penultimate step in the biosynthesis of riboflavin. This is 6,7-dimethyl-8-ribityllumazine synthase from Edwardsiella ictaluri (strain 93-146).